The primary structure comprises 174 residues: MALAHRLCRLPRLLPLAAAAAASKPYLPGKPSPAPPPPLSSPPPFPSLSRLFSTTPSSSGDSSMVVVGSAESFTSIMSKVEAEKLPAVFYYTAVWCGPCRAMAPVISKLSSRYPKIPIYKVDIDMDGVGSKLSDLKIFSVPTFHFYYQGRKTGEVVGANATKLESTMESLHKQL.

A mitochondrion-targeting transit peptide spans 1–59; the sequence is MALAHRLCRLPRLLPLAAAAAASKPYLPGKPSPAPPPPLSSPPPFPSLSRLFSTTPSSS. One can recognise a Thioredoxin domain in the interval 60–172; that stretch reads GDSSMVVVGS…LESTMESLHK (113 aa). Active-site nucleophile residues include cysteine 96 and cysteine 99. A disulfide bond links cysteine 96 and cysteine 99.

This sequence belongs to the thioredoxin family. Plant O-type subfamily.

It is found in the mitochondrion. In terms of biological role, probable thiol-disulfide oxidoreductase that may participate in various redox reactions. The sequence is that of Thioredoxin O, mitochondrial from Oryza sativa subsp. japonica (Rice).